Reading from the N-terminus, the 489-residue chain is Ribulose-1,5 bisphosphate carboxylase/oxygenase large subunit N-methyltransferase, chloroplastic (489 aa).

The transit peptide at 1-37 (MATIFSGGSVSPFLFHTNKGTSFTPKAPILHLKRSFS) directs the protein to the chloroplast. The SET domain occupies 64–288 (EGVITAKTPV…AGEQVYIQYD (225 aa)). Residues 80–82 (EGL) and Arg222 contribute to the S-adenosyl-L-methionine site. Positions 222, 226, and 239 each coordinate substrate. Residue 242–243 (NH) coordinates S-adenosyl-L-methionine. Substrate is bound by residues Tyr254, Tyr287, and Tyr300.

This sequence belongs to the class V-like SAM-binding methyltransferase superfamily. Plant protein-lysine LSMT methyltransferase family. Homotrimer. Highly expressed in leaf.

It localises to the plastid. It is found in the chloroplast. It catalyses the reaction L-lysyl-[ribulose-1,5-bisphosphate carboxylase] + 3 S-adenosyl-L-methionine = N(6),N(6),N(6)-trimethyl-L-lysyl-[ribulose-1,5-bisphosphate carboxylase] + 3 S-adenosyl-L-homocysteine + 3 H(+). The catalysed reaction is [fructose-bisphosphate aldolase]-L-lysine + 3 S-adenosyl-L-methionine = [fructose-bisphosphate aldolase]-N(6),N(6),N(6)-trimethyl-L-lysine + 3 S-adenosyl-L-homocysteine + 3 H(+). Functionally, methylates 'Lys-14' of the large subunit of RuBisCO. Can also use with lower efficiency chloroplastic fructose-bisphosphate aldolases and gamma-tocopherol methyltransferase as substrates, but not a cytosolic aldolase. In Pisum sativum (Garden pea), this protein is Ribulose-1,5 bisphosphate carboxylase/oxygenase large subunit N-methyltransferase, chloroplastic (RBCMT).